A 915-amino-acid chain; its full sequence is DNA repair-scaffolding protein (915 aa).

Residues methionine 1–serine 15 show a composition bias toward basic residues. Disordered regions lie at residues methionine 1–glutamine 30 and phenylalanine 56–threonine 114. The span at phenylalanine 56–leucine 65 shows a compositional bias: polar residues. The segment covering alanine 67–glutamine 85 has biased composition (basic and acidic residues). Residues glutamate 86–aspartate 107 show a composition bias toward polar residues. The segment at glutamate 151–glutamate 450 is necessary for interaction with RAD51.

Found in a complex, at least composed of BLM, RAD51 and SPIDR; the complex formation is mediated by SPIDR. Interacts (via C-terminal region) with BLM; the interaction is direct. Interacts with RAD51; the interaction is direct. Interacts (via the C-terminal region) with FIGNL1 (via N-terminal one-half region); the interaction is direct.

It localises to the nucleus. In terms of biological role, plays a role in DNA double-strand break (DBS) repair via homologous recombination (HR). Serves as a scaffolding protein that helps to promote the recruitment of DNA-processing enzymes like the helicase BLM and recombinase RAD51 to site of DNA damage, and hence contributes to maintain genomic integrity. This is DNA repair-scaffolding protein (SPIDR) from Homo sapiens (Human).